A 157-amino-acid polypeptide reads, in one-letter code: Crossover junction endodeoxyribonuclease RuvC (157 aa).

Residues Asp-7, Glu-66, and Asp-139 contribute to the active site. Mg(2+) is bound by residues Asp-7, Glu-66, and Asp-139.

The protein belongs to the RuvC family. In terms of assembly, homodimer which binds Holliday junction (HJ) DNA. The HJ becomes 2-fold symmetrical on binding to RuvC with unstacked arms; it has a different conformation from HJ DNA in complex with RuvA. In the full resolvosome a probable DNA-RuvA(4)-RuvB(12)-RuvC(2) complex forms which resolves the HJ. Mg(2+) serves as cofactor.

Its subcellular location is the cytoplasm. The catalysed reaction is Endonucleolytic cleavage at a junction such as a reciprocal single-stranded crossover between two homologous DNA duplexes (Holliday junction).. The RuvA-RuvB-RuvC complex processes Holliday junction (HJ) DNA during genetic recombination and DNA repair. Endonuclease that resolves HJ intermediates. Cleaves cruciform DNA by making single-stranded nicks across the HJ at symmetrical positions within the homologous arms, yielding a 5'-phosphate and a 3'-hydroxyl group; requires a central core of homology in the junction. The consensus cleavage sequence is 5'-(A/T)TT(C/G)-3'. Cleavage occurs on the 3'-side of the TT dinucleotide at the point of strand exchange. HJ branch migration catalyzed by RuvA-RuvB allows RuvC to scan DNA until it finds its consensus sequence, where it cleaves and resolves the cruciform DNA. Its function is as follows. Required for efficient infection in a mouse model system. The protein is Crossover junction endodeoxyribonuclease RuvC of Helicobacter pylori (strain G27).